The primary structure comprises 155 residues: Ribosome maturation factor RimP (155 aa).

The protein belongs to the RimP family.

It localises to the cytoplasm. Functionally, required for maturation of 30S ribosomal subunits. The polypeptide is Ribosome maturation factor RimP (Agathobacter rectalis (strain ATCC 33656 / DSM 3377 / JCM 17463 / KCTC 5835 / VPI 0990) (Eubacterium rectale)).